Consider the following 426-residue polypeptide: Enolase (426 aa).

Glutamine 163 contacts (2R)-2-phosphoglycerate. Glutamate 205 (proton donor) is an active-site residue. Mg(2+) is bound by residues aspartate 242, glutamate 283, and aspartate 310. The (2R)-2-phosphoglycerate site is built by lysine 335, arginine 364, serine 365, and lysine 386. Residue lysine 335 is the Proton acceptor of the active site.

It belongs to the enolase family. Requires Mg(2+) as cofactor.

It localises to the cytoplasm. The protein resides in the secreted. The protein localises to the cell surface. It carries out the reaction (2R)-2-phosphoglycerate = phosphoenolpyruvate + H2O. It participates in carbohydrate degradation; glycolysis; pyruvate from D-glyceraldehyde 3-phosphate: step 4/5. Catalyzes the reversible conversion of 2-phosphoglycerate (2-PG) into phosphoenolpyruvate (PEP). It is essential for the degradation of carbohydrates via glycolysis. The protein is Enolase of Aquifex aeolicus (strain VF5).